The following is a 250-amino-acid chain: tRNA (guanine-N(1)-)-methyltransferase (250 aa).

Residues glycine 116 and 136 to 141 (IGDYVL) contribute to the S-adenosyl-L-methionine site.

The protein belongs to the RNA methyltransferase TrmD family. As to quaternary structure, homodimer.

The protein localises to the cytoplasm. It carries out the reaction guanosine(37) in tRNA + S-adenosyl-L-methionine = N(1)-methylguanosine(37) in tRNA + S-adenosyl-L-homocysteine + H(+). Specifically methylates guanosine-37 in various tRNAs. In Pseudomonas fluorescens (strain SBW25), this protein is tRNA (guanine-N(1)-)-methyltransferase.